Here is a 167-residue protein sequence, read N- to C-terminus: Crossover junction endodeoxyribonuclease RuvC (167 aa).

Catalysis depends on residues D8, E67, and D139. Mg(2+) is bound by residues D8, E67, and D139.

The protein belongs to the RuvC family. In terms of assembly, homodimer which binds Holliday junction (HJ) DNA. The HJ becomes 2-fold symmetrical on binding to RuvC with unstacked arms; it has a different conformation from HJ DNA in complex with RuvA. In the full resolvosome a probable DNA-RuvA(4)-RuvB(12)-RuvC(2) complex forms which resolves the HJ. The cofactor is Mg(2+).

Its subcellular location is the cytoplasm. The catalysed reaction is Endonucleolytic cleavage at a junction such as a reciprocal single-stranded crossover between two homologous DNA duplexes (Holliday junction).. Its function is as follows. The RuvA-RuvB-RuvC complex processes Holliday junction (HJ) DNA during genetic recombination and DNA repair. Endonuclease that resolves HJ intermediates. Cleaves cruciform DNA by making single-stranded nicks across the HJ at symmetrical positions within the homologous arms, yielding a 5'-phosphate and a 3'-hydroxyl group; requires a central core of homology in the junction. The consensus cleavage sequence is 5'-(A/T)TT(C/G)-3'. Cleavage occurs on the 3'-side of the TT dinucleotide at the point of strand exchange. HJ branch migration catalyzed by RuvA-RuvB allows RuvC to scan DNA until it finds its consensus sequence, where it cleaves and resolves the cruciform DNA. The polypeptide is Crossover junction endodeoxyribonuclease RuvC (Halorhodospira halophila (strain DSM 244 / SL1) (Ectothiorhodospira halophila (strain DSM 244 / SL1))).